A 467-amino-acid chain; its full sequence is tRNA modification GTPase MnmE (467 aa).

Positions 25, 87, and 130 each coordinate (6S)-5-formyl-5,6,7,8-tetrahydrofolate. A TrmE-type G domain is found at 226–389 (GLSVVLAGQP…LRGELLRIAG (164 aa)). A K(+)-binding site is contributed by Asn-236. Residues 236-241 (NVGKSS), 255-261 (TPIAGTT), and 280-283 (DTAG) contribute to the GTP site. Ser-240 contacts Mg(2+). Residues Thr-255, Ile-257, and Thr-260 each contribute to the K(+) site. Position 261 (Thr-261) interacts with Mg(2+). A (6S)-5-formyl-5,6,7,8-tetrahydrofolate-binding site is contributed by Lys-467.

The protein belongs to the TRAFAC class TrmE-Era-EngA-EngB-Septin-like GTPase superfamily. TrmE GTPase family. In terms of assembly, homodimer. Heterotetramer of two MnmE and two MnmG subunits. K(+) is required as a cofactor.

The protein resides in the cytoplasm. Its function is as follows. Exhibits a very high intrinsic GTPase hydrolysis rate. Involved in the addition of a carboxymethylaminomethyl (cmnm) group at the wobble position (U34) of certain tRNAs, forming tRNA-cmnm(5)s(2)U34. The protein is tRNA modification GTPase MnmE of Burkholderia thailandensis (strain ATCC 700388 / DSM 13276 / CCUG 48851 / CIP 106301 / E264).